A 609-amino-acid polypeptide reads, in one-letter code: Dihydroxy-acid dehydratase (609 aa).

Residue Asp81 participates in Mg(2+) binding. Residue Cys122 coordinates [2Fe-2S] cluster. 2 residues coordinate Mg(2+): Asp123 and Lys124. Lys124 is subject to N6-carboxylysine. Cys195 provides a ligand contact to [2Fe-2S] cluster. Glu491 provides a ligand contact to Mg(2+). The active-site Proton acceptor is the Ser517.

The protein belongs to the IlvD/Edd family. In terms of assembly, homodimer. Requires [2Fe-2S] cluster as cofactor. It depends on Mg(2+) as a cofactor.

The catalysed reaction is (2R)-2,3-dihydroxy-3-methylbutanoate = 3-methyl-2-oxobutanoate + H2O. The enzyme catalyses (2R,3R)-2,3-dihydroxy-3-methylpentanoate = (S)-3-methyl-2-oxopentanoate + H2O. Its pathway is amino-acid biosynthesis; L-isoleucine biosynthesis; L-isoleucine from 2-oxobutanoate: step 3/4. It functions in the pathway amino-acid biosynthesis; L-valine biosynthesis; L-valine from pyruvate: step 3/4. In terms of biological role, functions in the biosynthesis of branched-chain amino acids. Catalyzes the dehydration of (2R,3R)-2,3-dihydroxy-3-methylpentanoate (2,3-dihydroxy-3-methylvalerate) into 2-oxo-3-methylpentanoate (2-oxo-3-methylvalerate) and of (2R)-2,3-dihydroxy-3-methylbutanoate (2,3-dihydroxyisovalerate) into 2-oxo-3-methylbutanoate (2-oxoisovalerate), the penultimate precursor to L-isoleucine and L-valine, respectively. This chain is Dihydroxy-acid dehydratase, found in Acinetobacter baumannii (strain ACICU).